We begin with the raw amino-acid sequence, 352 residues long: Small ribosomal subunit biogenesis GTPase RsgA (352 aa).

Positions 1–15 are enriched in basic residues; that stretch reads MTKRKLTQNQKRRIH. Positions 1 to 26 are disordered; sequence MTKRKLTQNQKRRIHSNNVKALDRHH. The 169-residue stretch at 106 to 274 folds into the CP-type G domain; it reads ENEIARPDYY…LIDSPGIREF (169 aa). GTP-binding positions include 162–165 and 216–224; these read NKVD and GQSGVGKSS. Residues C298, C303, H305, and C311 each contribute to the Zn(2+) site.

This sequence belongs to the TRAFAC class YlqF/YawG GTPase family. RsgA subfamily. As to quaternary structure, monomer. Associates with 30S ribosomal subunit, binds 16S rRNA. The cofactor is Zn(2+).

Its subcellular location is the cytoplasm. Its function is as follows. One of several proteins that assist in the late maturation steps of the functional core of the 30S ribosomal subunit. Helps release RbfA from mature subunits. May play a role in the assembly of ribosomal proteins into the subunit. Circularly permuted GTPase that catalyzes slow GTP hydrolysis, GTPase activity is stimulated by the 30S ribosomal subunit. The polypeptide is Small ribosomal subunit biogenesis GTPase RsgA (Mannheimia succiniciproducens (strain KCTC 0769BP / MBEL55E)).